Reading from the N-terminus, the 64-residue chain is Epidermal growth factor (64 aa).

Positions 1-21 are cleaved as a signal peptide; it reads MMRHLLLVGAAILIFVSDAQA. Gln22 is subject to Pyrrolidone carboxylic acid. The EGF-like domain maps to 25-61; that stretch reads GEDPCQIVRCSYGANCIAYGDTAICECPFGYSGIRCQ. Disulfide bonds link Cys29–Cys40, Cys34–Cys49, and Cys51–Cys60.

As to expression, albumen gland. Up-regulated in adult CNS after axotomy.

It localises to the secreted. Induces neurite outgrowth in specific adult neurons in vitro. The polypeptide is Epidermal growth factor (Lymnaea stagnalis (Great pond snail)).